A 926-amino-acid chain; its full sequence is Alanine--tRNA ligase (926 aa).

Residues His-611, His-615, Cys-714, and His-718 each coordinate Zn(2+).

The protein belongs to the class-II aminoacyl-tRNA synthetase family. Zn(2+) is required as a cofactor.

The protein localises to the cytoplasm. It catalyses the reaction tRNA(Ala) + L-alanine + ATP = L-alanyl-tRNA(Ala) + AMP + diphosphate. Its function is as follows. Catalyzes the attachment of alanine to tRNA(Ala) in a two-step reaction: alanine is first activated by ATP to form Ala-AMP and then transferred to the acceptor end of tRNA(Ala). Also edits incorrectly charged Ser-tRNA(Ala) and Gly-tRNA(Ala) via its editing domain. This is Alanine--tRNA ligase from Methanosarcina mazei (strain ATCC BAA-159 / DSM 3647 / Goe1 / Go1 / JCM 11833 / OCM 88) (Methanosarcina frisia).